Consider the following 299-residue polypeptide: MTIELKNEYLTVQFKTLGGQLTSIKDKDGLEYLWQADPEYWNGQAPILFPICGSLRNDWAIYRPQDRPFFTGLIRRHGFVRKEEFTLEEVNENSVTFSIKPNAEMLDNYLYQFELRVVYTLNGKSIRTEFQVTNLETEKTMPYFIGAHPAFNCPLVEGEKYEDYSLEFSEVESCSIPKSFPETGLLDLQDRTPFLENQKSLDLDYSLFSHDAITLDRLKSRSVTLRSRKSGKGLRVDFDDFPNLILWSTSNKSPFIALEPWSGLSTSLEEGNILEDKPQVTKVLPLDTSKKSYDITILN.

The sequence is that of Protein LacX, chromosomal (lacX) from Lactococcus lactis subsp. lactis (Streptococcus lactis).